Here is a 386-residue protein sequence, read N- to C-terminus: Zinc finger protein 385A (386 aa).

The Matrin-type 1 zinc-finger motif lies at 74 to 98 (ISCNVCQIRFNSQSQAEAHYKGNRH). The disordered stretch occupies residues 88–193 (QAEAHYKGNR…ASLPGGSKEE (106 aa)). Over residues 103-121 (KGIEAAKTRGREPSVRESG) the composition is skewed to basic and acidic residues. Residues 145-351 (NGLGPAPGSP…AGSPLSLRPA (207 aa)) are necessary for binding to ITPR1, CEBPA and p53/TP53 mRNAs. Serine 185 carries the post-translational modification Phosphoserine. A Matrin-type 2 zinc finger spans residues 201–225 (LYCALCKVAVNSLSQLEAHNKGTKH). A Phosphothreonine modification is found at threonine 248. Residues 261 to 285 (FHCEICNVKVNSEVQLKQHISSRRH) form a Matrin-type 3 zinc finger. The tract at residues 279-305 (HISSRRHRDGVAGKPNPLLSRHKKPRG) is disordered.

In terms of assembly, interacts with p53/TP53; the interaction is direct and enhances p53/TP53 transactivation functions on cell-cycle arrest target genes, resulting in growth arrest. Interacts with ELAVL1; the interaction is indirect, mRNA-dependent and may regulate p53/TP53 expression. Ubiquitinated upon prolonged exposure to genotoxic stress, which leads to proteasomal degradation of ZNF385A and releases p53/TP53 from cell-cycle arrest target gene promoters. Expressed in brain and testis (at protein level). In brain, the expression is located to olfactory bulb, cerebral cortex, hippocampus, satellite cells and Purkinje cells of the cerebellum molecular layer. Detected in bone marrow, white and brown adipose tissue, lung and at lower levels in the thymus.

The protein resides in the cytoplasm. It localises to the nucleus. It is found in the nucleolus. The protein localises to the cell projection. Its subcellular location is the dendrite. Functionally, RNA-binding protein that affects the localization and the translation of a subset of mRNA. May play a role in adipogenesis through binding to the 3'-UTR of CEBPA mRNA and regulation of its translation. Targets ITPR1 mRNA to dendrites in Purkinje cells, and may regulate its activity-dependent translation. With ELAVL1, binds the 3'-UTR of p53/TP53 mRNAs to control their nuclear export induced by CDKN2A. Hence, may regulate p53/TP53 expression and mediate in part the CDKN2A anti-proliferative activity. May also bind CCNB1 mRNA. Alternatively, may also regulate p53/TP53 activity through direct protein-protein interaction. Interacts with p53/TP53 and promotes cell-cycle arrest over apoptosis enhancing preferentially the DNA binding and transactivation of p53/TP53 on cell-cycle arrest target genes over proapoptotic target genes. May also regulate the ubiquitination and stability of CDKN1A promoting DNA damage-induced cell cycle arrest. Also plays a role in megakaryocytes differentiation. In Mus musculus (Mouse), this protein is Zinc finger protein 385A (Znf385a).